The primary structure comprises 154 residues: Holo-[acyl-carrier-protein] synthase (154 aa).

2 residues coordinate Mg(2+): Asp8 and Glu57.

Belongs to the P-Pant transferase superfamily. AcpS family. It depends on Mg(2+) as a cofactor.

Its subcellular location is the cytoplasm. It catalyses the reaction apo-[ACP] + CoA = holo-[ACP] + adenosine 3',5'-bisphosphate + H(+). Transfers the 4'-phosphopantetheine moiety from coenzyme A to a Ser of acyl-carrier-protein. This is Holo-[acyl-carrier-protein] synthase from Nitrosococcus oceani (strain ATCC 19707 / BCRC 17464 / JCM 30415 / NCIMB 11848 / C-107).